A 162-amino-acid polypeptide reads, in one-letter code: Ribonuclease P protein component (162 aa).

The segment at 1–62 is disordered; sequence MDEKDLATQP…GPPKAGGRLL (62 aa). Positions 21–36 are enriched in basic and acidic residues; sequence GPHEDPRRQERAEAQA.

It belongs to the RnpA family. As to quaternary structure, consists of a catalytic RNA component (M1 or rnpB) and a protein subunit.

The catalysed reaction is Endonucleolytic cleavage of RNA, removing 5'-extranucleotides from tRNA precursor.. Its function is as follows. RNaseP catalyzes the removal of the 5'-leader sequence from pre-tRNA to produce the mature 5'-terminus. It can also cleave other RNA substrates such as 4.5S RNA. The protein component plays an auxiliary but essential role in vivo by binding to the 5'-leader sequence and broadening the substrate specificity of the ribozyme. In Thermus aquaticus, this protein is Ribonuclease P protein component.